We begin with the raw amino-acid sequence, 249 residues long: Protein LicA homolog (249 aa).

Belongs to the peptidase S49 family.

The protein is Protein LicA homolog (licA) of Metamycoplasma hominis (strain ATCC 23114 / DSM 25592 / NBRC 14850 / NCTC 10111 / PG21) (Mycoplasma hominis).